The sequence spans 143 residues: Transcriptional regulator MraZ (143 aa).

SpoVT-AbrB domains lie at 5–47 (EYQH…SLEE) and 76–119 (AAEV…DKSK).

It belongs to the MraZ family. In terms of assembly, forms oligomers.

Its subcellular location is the cytoplasm. It localises to the nucleoid. The protein is Transcriptional regulator MraZ of Acetivibrio thermocellus (strain ATCC 27405 / DSM 1237 / JCM 9322 / NBRC 103400 / NCIMB 10682 / NRRL B-4536 / VPI 7372) (Clostridium thermocellum).